The sequence spans 228 residues: Thermonuclease (228 aa).

Residues 1–23 form the signal peptide; sequence MTEYLLSAGICMAIVSILLIGMA. A propeptide spanning residues 24–60 is cleaved from the precursor; sequence ISNVSKGQYAKRFFYFATSCLVLTLVVVSSLSSSANA. Residues 58 to 70 show a composition bias toward polar residues; sequence ANASQTDNGVNRS. The segment at 58–83 is disordered; sequence ANASQTDNGVNRSGSEDPTVYSATST. Aspartate 100 lines the Ca(2+) pocket. Arginine 114 is a catalytic residue. Ca(2+)-binding residues include aspartate 119 and threonine 120. Catalysis depends on residues glutamate 122 and arginine 166.

It belongs to the thermonuclease family. It depends on Ca(2+) as a cofactor.

The protein localises to the secreted. It catalyses the reaction Endonucleolytic cleavage to nucleoside 3'-phosphates and 3'-phosphooligonucleotide end-products.. Its function is as follows. Enzyme that catalyzes the hydrolysis of both DNA and RNA at the 5' position of the phosphodiester bond. This chain is Thermonuclease (nuc), found in Staphylococcus aureus (strain COL).